The following is a 451-amino-acid chain: Serine--tRNA ligase, cytoplasmic (451 aa).

Residue 236 to 238 (TSE) participates in L-serine binding. ATP-binding positions include 267-269 (RKE) and valine 283. An L-serine-binding site is contributed by glutamate 290. 354 to 357 (ELVS) is an ATP binding site. Residue threonine 392 participates in L-serine binding.

Belongs to the class-II aminoacyl-tRNA synthetase family. Type-1 seryl-tRNA synthetase subfamily. In terms of assembly, homodimer. The tRNA molecule binds across the dimer.

The protein localises to the cytoplasm. It catalyses the reaction tRNA(Ser) + L-serine + ATP = L-seryl-tRNA(Ser) + AMP + diphosphate + H(+). The catalysed reaction is tRNA(Sec) + L-serine + ATP = L-seryl-tRNA(Sec) + AMP + diphosphate + H(+). It participates in aminoacyl-tRNA biosynthesis; selenocysteinyl-tRNA(Sec) biosynthesis; L-seryl-tRNA(Sec) from L-serine and tRNA(Sec): step 1/1. Functionally, catalyzes the attachment of serine to tRNA(Ser). Is also able to aminoacylate tRNA(Sec) with serine, to form the misacylated tRNA L-seryl-tRNA(Sec), which will be further converted into selenocysteinyl-tRNA(Sec). This is Serine--tRNA ligase, cytoplasmic (serS) from Dictyostelium discoideum (Social amoeba).